A 329-amino-acid chain; its full sequence is Malate dehydrogenase (329 aa).

12-18 (GAAGQIG) lines the NAD(+) pocket. Substrate-binding residues include Arg-95 and Arg-101. Residues Asn-108, Gln-115, and 132 to 134 (VGN) each bind NAD(+). 2 residues coordinate substrate: Asn-134 and Arg-165. The active-site Proton acceptor is the His-190.

Belongs to the LDH/MDH superfamily. MDH type 2 family.

The enzyme catalyses (S)-malate + NAD(+) = oxaloacetate + NADH + H(+). Catalyzes the reversible oxidation of malate to oxaloacetate. The polypeptide is Malate dehydrogenase (Bordetella avium (strain 197N)).